The sequence spans 686 residues: Methionine--tRNA ligase (686 aa).

Positions 15–25 match the 'HIGH' region motif; it reads PYANGSIHLGH. Zn(2+) contacts are provided by C146, C149, C159, and C162. The short motif at 332 to 336 is the 'KMSKS' region element; sequence KMSKS. K335 contributes to the ATP binding site. The tRNA-binding domain maps to 585–686; that stretch reads AFAAVDMRIA…EGAQPGMRVM (102 aa).

The protein belongs to the class-I aminoacyl-tRNA synthetase family. MetG type 1 subfamily. In terms of assembly, homodimer. Zn(2+) serves as cofactor.

It is found in the cytoplasm. The enzyme catalyses tRNA(Met) + L-methionine + ATP = L-methionyl-tRNA(Met) + AMP + diphosphate. Its function is as follows. Is required not only for elongation of protein synthesis but also for the initiation of all mRNA translation through initiator tRNA(fMet) aminoacylation. The protein is Methionine--tRNA ligase of Vibrio campbellii (strain ATCC BAA-1116).